We begin with the raw amino-acid sequence, 325 residues long: Elongation factor P--(R)-beta-lysine ligase (325 aa).

76–78 provides a ligand contact to substrate; sequence SPE. Residues 100–102 and asparagine 109 each bind ATP; that span reads RNE. Residue tyrosine 118 coordinates substrate. 244-245 contacts ATP; sequence EL. Residue glutamate 251 coordinates substrate. An ATP-binding site is contributed by glycine 300.

It belongs to the class-II aminoacyl-tRNA synthetase family. EpmA subfamily. As to quaternary structure, homodimer.

The enzyme catalyses D-beta-lysine + L-lysyl-[protein] + ATP = N(6)-((3R)-3,6-diaminohexanoyl)-L-lysyl-[protein] + AMP + diphosphate + H(+). Its function is as follows. With EpmB is involved in the beta-lysylation step of the post-translational modification of translation elongation factor P (EF-P) on 'Lys-34'. Catalyzes the ATP-dependent activation of (R)-beta-lysine produced by EpmB, forming a lysyl-adenylate, from which the beta-lysyl moiety is then transferred to the epsilon-amino group of EF-P 'Lys-34'. The sequence is that of Elongation factor P--(R)-beta-lysine ligase from Escherichia fergusonii (strain ATCC 35469 / DSM 13698 / CCUG 18766 / IAM 14443 / JCM 21226 / LMG 7866 / NBRC 102419 / NCTC 12128 / CDC 0568-73).